A 130-amino-acid polypeptide reads, in one-letter code: Protein ApaG (130 aa).

The 125-residue stretch at 3 to 127 (RALTRDIEVT…FSLDSPGLVR (125 aa)) folds into the ApaG domain.

In Rhizobium meliloti (strain 1021) (Ensifer meliloti), this protein is Protein ApaG.